The primary structure comprises 212 residues: Pyrrolidone-carboxylate peptidase (212 aa).

Active-site residues include glutamate 80, cysteine 143, and histidine 165.

The protein belongs to the peptidase C15 family. In terms of assembly, homotetramer.

It is found in the cytoplasm. It carries out the reaction Release of an N-terminal pyroglutamyl group from a polypeptide, the second amino acid generally not being Pro.. Functionally, removes 5-oxoproline from various penultimate amino acid residues except L-proline. The polypeptide is Pyrrolidone-carboxylate peptidase (Vibrio campbellii (strain ATCC BAA-1116)).